A 257-amino-acid chain; its full sequence is 5'-nucleotidase SurE (257 aa).

The a divalent metal cation site is built by D8, D9, S40, and N92.

Belongs to the SurE nucleotidase family. The cofactor is a divalent metal cation.

It localises to the cytoplasm. The catalysed reaction is a ribonucleoside 5'-phosphate + H2O = a ribonucleoside + phosphate. Nucleotidase that shows phosphatase activity on nucleoside 5'-monophosphates. The chain is 5'-nucleotidase SurE from Rhizobium etli (strain ATCC 51251 / DSM 11541 / JCM 21823 / NBRC 15573 / CFN 42).